We begin with the raw amino-acid sequence, 161 residues long: uncharacterized protein (161 aa).

Disordered regions lie at residues 47–83 (KPAKRNIHGHNNHTRSSNHPHSGAHSNINHNNNNNIN) and 104–137 (RRLQQNGGGGDSSSSRSSNNNNSTNDNKPQSKNY). Positions 50–64 (KRNIHGHNNHTRSSN) are enriched in basic residues. 2 stretches are compositionally biased toward low complexity: residues 73–83 (NINHNNNNNIN) and 115–130 (SSSSRSSNNNNSTNDN).

This is an uncharacterized protein from Dictyostelium discoideum (Social amoeba).